Reading from the N-terminus, the 263-residue chain is L-aspartate dehydrogenase (263 aa).

The NAD(+) site is built by Ala120 and Asn186. Residue His216 is part of the active site.

The protein belongs to the L-aspartate dehydrogenase family.

The catalysed reaction is L-aspartate + NADP(+) + H2O = oxaloacetate + NH4(+) + NADPH + H(+). The enzyme catalyses L-aspartate + NAD(+) + H2O = oxaloacetate + NH4(+) + NADH + H(+). It functions in the pathway cofactor biosynthesis; NAD(+) biosynthesis; iminoaspartate from L-aspartate (dehydrogenase route): step 1/1. Its function is as follows. Specifically catalyzes the NAD or NADP-dependent dehydrogenation of L-aspartate to iminoaspartate. In Acinetobacter baylyi (strain ATCC 33305 / BD413 / ADP1), this protein is L-aspartate dehydrogenase.